The primary structure comprises 543 residues: Peptide chain release factor 3 (543 aa).

Residues 21–289 (KKRRTFAIIS…ALSDWAPSPL (269 aa)) enclose the tr-type G domain. GTP is bound by residues 30-37 (SHPDAGKT), 98-102 (DTPGH), and 152-155 (NKLD).

Belongs to the TRAFAC class translation factor GTPase superfamily. Classic translation factor GTPase family. PrfC subfamily.

Its subcellular location is the cytoplasm. Its function is as follows. Increases the formation of ribosomal termination complexes and stimulates activities of RF-1 and RF-2. It binds guanine nucleotides and has strong preference for UGA stop codons. It may interact directly with the ribosome. The stimulation of RF-1 and RF-2 is significantly reduced by GTP and GDP, but not by GMP. The polypeptide is Peptide chain release factor 3 (Thiobacillus denitrificans (strain ATCC 25259 / T1)).